A 244-amino-acid polypeptide reads, in one-letter code: 1-(5-phosphoribosyl)-5-[(5-phosphoribosylamino)methylideneamino] imidazole-4-carboxamide isomerase (244 aa).

D8 acts as the Proton acceptor in catalysis. D129 (proton donor) is an active-site residue.

It belongs to the HisA/HisF family.

The protein resides in the cytoplasm. The enzyme catalyses 1-(5-phospho-beta-D-ribosyl)-5-[(5-phospho-beta-D-ribosylamino)methylideneamino]imidazole-4-carboxamide = 5-[(5-phospho-1-deoxy-D-ribulos-1-ylimino)methylamino]-1-(5-phospho-beta-D-ribosyl)imidazole-4-carboxamide. Its pathway is amino-acid biosynthesis; L-histidine biosynthesis; L-histidine from 5-phospho-alpha-D-ribose 1-diphosphate: step 4/9. The chain is 1-(5-phosphoribosyl)-5-[(5-phosphoribosylamino)methylideneamino] imidazole-4-carboxamide isomerase from Maricaulis maris (strain MCS10) (Caulobacter maris).